A 189-amino-acid chain; its full sequence is Penicillin-binding protein activator LpoB (189 aa).

The first 16 residues, 1–16 (MRRILFVALSVMFLAG), serve as a signal peptide directing secretion. Residue Cys17 is the site of N-palmitoyl cysteine attachment. Cys17 carries the S-diacylglycerol cysteine lipid modification. The interval 18–52 (PSLPPEQPEPPTPVVPVTPSEKPTPPSEKVPEPPK) is disordered. Residues 19-45 (SLPPEQPEPPTPVVPVTPSEKPTPPSE) are compositionally biased toward pro residues.

The protein belongs to the LpoB family. As to quaternary structure, interacts with PBP1b.

It is found in the cell outer membrane. In terms of biological role, regulator of peptidoglycan synthesis that is essential for the function of penicillin-binding protein 1B (PBP1b). The chain is Penicillin-binding protein activator LpoB from Photorhabdus laumondii subsp. laumondii (strain DSM 15139 / CIP 105565 / TT01) (Photorhabdus luminescens subsp. laumondii).